Consider the following 280-residue polypeptide: Gastrula zinc finger protein XlCGF46.1 (280 aa).

C2H2-type zinc fingers lie at residues 6–28 (FACK…KLMH), 34–56 (FECT…QLIH), 62–84 (FVCP…LLCH), 90–112 (FTCK…KLTH), 118–140 (FICS…QLIH), 146–168 (YVCT…LRTH), 174–196 (FKCE…KVTH), 202–224 (FTCE…QLTH), 230–252 (FKCE…QRFH), and 258–280 (YKCN…ELSH).

It belongs to the krueppel C2H2-type zinc-finger protein family.

It localises to the nucleus. Functionally, may be involved in transcriptional regulation. The sequence is that of Gastrula zinc finger protein XlCGF46.1 from Xenopus laevis (African clawed frog).